Consider the following 65-residue polypeptide: MPKLKTHRGAAKRFKVTGSGKIRRNKAFKSHILTKKSAKRKRGFRAGDLVHERDVAGVRKMLPYL.

Belongs to the bacterial ribosomal protein bL35 family.

In Magnetococcus marinus (strain ATCC BAA-1437 / JCM 17883 / MC-1), this protein is Large ribosomal subunit protein bL35.